Here is a 292-residue protein sequence, read N- to C-terminus: Cyclin-dependent kinase A-2 (292 aa).

The Protein kinase domain occupies 4 to 286 (YEKVEKIGEG…ARAALEHEYF (283 aa)). Residues 10–18 (IGEGTYGVV) and K33 contribute to the ATP site. At T14 the chain carries Phosphothreonine. Y15 is subject to Phosphotyrosine. Catalysis depends on D126, which acts as the Proton acceptor. A Phosphothreonine modification is found at T160.

It belongs to the protein kinase superfamily. CMGC Ser/Thr protein kinase family. CDC2/CDKX subfamily. As to expression, expressed in the dividing region of the root apex and in differentiated cells such as those in the sclerenchyma, pericycle and parenchyma of the central cylinder. Expressed in the intercalary meristem and the elongation zone of internodes.

It carries out the reaction L-seryl-[protein] + ATP = O-phospho-L-seryl-[protein] + ADP + H(+). It catalyses the reaction L-threonyl-[protein] + ATP = O-phospho-L-threonyl-[protein] + ADP + H(+). The catalysed reaction is [DNA-directed RNA polymerase] + ATP = phospho-[DNA-directed RNA polymerase] + ADP + H(+). In Oryza sativa subsp. japonica (Rice), this protein is Cyclin-dependent kinase A-2 (CDKA-2).